The chain runs to 586 residues: Aspartate--tRNA ligase (586 aa).

Glu171 lines the L-aspartate pocket. Residues 195-198 form an aspartate region; that stretch reads QLFK. Arg217 is a binding site for L-aspartate. ATP is bound by residues 217 to 219 and Gln226; that span reads RDE. Residue His448 coordinates L-aspartate. An ATP-binding site is contributed by Glu482. Arg489 is a binding site for L-aspartate. Residue 534–537 coordinates ATP; sequence GLDR.

Belongs to the class-II aminoacyl-tRNA synthetase family. Type 1 subfamily. In terms of assembly, homodimer.

It is found in the cytoplasm. It carries out the reaction tRNA(Asp) + L-aspartate + ATP = L-aspartyl-tRNA(Asp) + AMP + diphosphate. In terms of biological role, catalyzes the attachment of L-aspartate to tRNA(Asp) in a two-step reaction: L-aspartate is first activated by ATP to form Asp-AMP and then transferred to the acceptor end of tRNA(Asp). The chain is Aspartate--tRNA ligase from Buchnera aphidicola subsp. Acyrthosiphon pisum (strain APS) (Acyrthosiphon pisum symbiotic bacterium).